A 466-amino-acid polypeptide reads, in one-letter code: Putative chitinase (466 aa).

An N-terminal signal peptide occupies residues 1-17; sequence MYLTIWLVSILALGTWG. The region spanning 20-380 is the GH18 domain; it reads FNRFCHYNSW…MAVIHGLNAY (361 aa). Cys24 and Cys49 are joined by a disulfide. Glu141 serves as the catalytic Proton donor. Residues 408-442 are a coiled coil; it reads NYRRRNQQEKVAEMEQRIRHLEQELQQSMGNMAYE.

It belongs to the glycosyl hydrolase 18 family. In terms of tissue distribution, prismatic layer of shell (at protein level). Expressed primarily in the mantle with highest level in the mantle edge and lower level in the mantle pallium.

The protein localises to the secreted. It catalyses the reaction Random endo-hydrolysis of N-acetyl-beta-D-glucosaminide (1-&gt;4)-beta-linkages in chitin and chitodextrins.. In Pinctada maxima (Silver-lipped pearl oyster), this protein is Putative chitinase.